The primary structure comprises 210 residues: MADAKELKQVLIGPIVSNNPIALQILGVCSALAVTSKMETALVMTIALTAVCALSNLFISLIRNHIPSSVRIIVQMTIIASLVIVVDQVLQAYAYDVAKQLSVFVGLIITNCIVMGRAEAYAMKTPPMMSFMDGIGNGLGYGAILLSVGFVRELFGNGSLFGIEILSKISDGGWYQPNGLLLLPPSAFFLIGALIWIIRVMKPEQVEAKG.

Helical transmembrane passes span 10–30 (VLIGPIVSNNPIALQILGVCS), 42–62 (LVMTIALTAVCALSNLFISLI), 72–92 (IIVQMTIIASLVIVVDQVLQA), 103–123 (VFVGLIITNCIVMGRAEAYAM), 131–151 (FMDGIGNGLGYGAILLSVGFV), and 178–198 (NGLLLLPPSAFFLIGALIWII).

The protein belongs to the NqrDE/RnfAE family. As to quaternary structure, composed of six subunits; NqrA, NqrB, NqrC, NqrD, NqrE and NqrF.

It is found in the cell inner membrane. It carries out the reaction a ubiquinone + n Na(+)(in) + NADH + H(+) = a ubiquinol + n Na(+)(out) + NAD(+). NQR complex catalyzes the reduction of ubiquinone-1 to ubiquinol by two successive reactions, coupled with the transport of Na(+) ions from the cytoplasm to the periplasm. NqrA to NqrE are probably involved in the second step, the conversion of ubisemiquinone to ubiquinol. The polypeptide is Na(+)-translocating NADH-quinone reductase subunit D (Shewanella pealeana (strain ATCC 700345 / ANG-SQ1)).